Reading from the N-terminus, the 505-residue chain is MFS-type transporter oryN (505 aa).

Positions 1 to 54 (MAVAELPNIVSTDSSPSPHPGSRLSSEPTDIESQKAPSNAEPKTDPNLVTWDGP) are disordered. Helical transmembrane passes span 69-89 (AFVT…SSIF), 106-126 (VVTL…PVWG), 135-155 (KWPM…VAVA), 166-186 (FLTG…LVDM), 193-213 (GVAM…APLM), 226-246 (FTQW…VFGL), 280-300 (GIKD…VTEP), 301-321 (ILLL…LVFV), 337-357 (ISAL…AIVV), 376-396 (LPLM…FAWT), 401-421 (IHWA…YMVF), 440-460 (IGAN…FGPF), and 468-488 (AWAS…PVLF).

Belongs to the major facilitator superfamily. CAR1 family.

The protein resides in the membrane. In terms of biological role, MFS-type transporter; part of the gene cluster that mediates the biosynthesis of oryzines, natural products with an unusual maleidride backbone. This Aspergillus oryzae (strain ATCC 42149 / RIB 40) (Yellow koji mold) protein is MFS-type transporter oryN.